We begin with the raw amino-acid sequence, 419 residues long: UDP-N-acetylglucosamine 1-carboxyvinyltransferase (419 aa).

22-23 contributes to the phosphoenolpyruvate binding site; it reads KN. Arg95 provides a ligand contact to UDP-N-acetyl-alpha-D-glucosamine. Cys119 functions as the Proton donor in the catalytic mechanism. Cys119 carries the post-translational modification 2-(S-cysteinyl)pyruvic acid O-phosphothioketal. UDP-N-acetyl-alpha-D-glucosamine-binding positions include 164 to 167, Asp308, and Ile330; that span reads KVSV.

The protein belongs to the EPSP synthase family. MurA subfamily.

The protein localises to the cytoplasm. It catalyses the reaction phosphoenolpyruvate + UDP-N-acetyl-alpha-D-glucosamine = UDP-N-acetyl-3-O-(1-carboxyvinyl)-alpha-D-glucosamine + phosphate. Its pathway is cell wall biogenesis; peptidoglycan biosynthesis. In terms of biological role, cell wall formation. Adds enolpyruvyl to UDP-N-acetylglucosamine. The polypeptide is UDP-N-acetylglucosamine 1-carboxyvinyltransferase (Rickettsia massiliae (strain Mtu5)).